The primary structure comprises 131 residues: Large ribosomal subunit protein bL12 (131 aa).

The protein belongs to the bacterial ribosomal protein bL12 family. As to quaternary structure, homodimer. Part of the ribosomal stalk of the 50S ribosomal subunit. Forms a multimeric L10(L12)X complex, where L10 forms an elongated spine to which 2 to 4 L12 dimers bind in a sequential fashion. Binds GTP-bound translation factors.

Functionally, forms part of the ribosomal stalk which helps the ribosome interact with GTP-bound translation factors. Is thus essential for accurate translation. The protein is Large ribosomal subunit protein bL12 of Parasynechococcus marenigrum (strain WH8102).